The chain runs to 375 residues: Succinyl-diaminopimelate desuccinylase (375 aa).

H66 is a Zn(2+) binding site. D68 is a catalytic residue. D99 contributes to the Zn(2+) binding site. E133 acts as the Proton acceptor in catalysis. Residues E134, E162, and H348 each contribute to the Zn(2+) site.

The protein belongs to the peptidase M20A family. DapE subfamily. As to quaternary structure, homodimer. Zn(2+) serves as cofactor. The cofactor is Co(2+).

It catalyses the reaction N-succinyl-(2S,6S)-2,6-diaminopimelate + H2O = (2S,6S)-2,6-diaminopimelate + succinate. It functions in the pathway amino-acid biosynthesis; L-lysine biosynthesis via DAP pathway; LL-2,6-diaminopimelate from (S)-tetrahydrodipicolinate (succinylase route): step 3/3. Catalyzes the hydrolysis of N-succinyl-L,L-diaminopimelic acid (SDAP), forming succinate and LL-2,6-diaminopimelate (DAP), an intermediate involved in the bacterial biosynthesis of lysine and meso-diaminopimelic acid, an essential component of bacterial cell walls. The protein is Succinyl-diaminopimelate desuccinylase of Klebsiella pneumoniae subsp. pneumoniae (strain ATCC 700721 / MGH 78578).